The sequence spans 221 residues: N-acetyltransferase 8F1 (221 aa).

A helical membrane pass occupies residues 53–73; it reads LVLVSGSWLLAVVCIFFLLLL. The 151-residue stretch at 69-219 folds into the N-acetyltransferase domain; it reads FLLLLLRFLA…RTIQLKYPFP (151 aa).

The protein belongs to the camello family.

The protein resides in the membrane. May play a role in regulation of gastrulation. This chain is N-acetyltransferase 8F1, found in Rattus norvegicus (Rat).